We begin with the raw amino-acid sequence, 385 residues long: Isocitrate dehydrogenase [NAD] subunit beta, mitochondrial (385 aa).

The transit peptide at 1–33 (MAALSRVRWLTRALVAAPNPGAWRSLCTSTVAQ) directs the protein to the mitochondrion. N6-acetyllysine is present on lysine 199.

The protein belongs to the isocitrate and isopropylmalate dehydrogenases family. Heterooligomer of subunits alpha (IDH3A), beta (IDH3B), and gamma (IDH3G) in the apparent ratio of 2:1:1. The heterodimer containing one IDH3A and one IDH3B subunit and the heterodimer containing one IDH3A and one IDH3G subunit assemble into a heterotetramer (which contains two subunits of IDH3A, one of IDH3B and one of IDH3G) and further into the heterooctamer. Isoform A is predominant in heart muscle; also found in brain, kidney and liver. Isoform B is present in kidney and liver.

It localises to the mitochondrion. With respect to regulation, the heterotetramer and the heterodimer composed of IDH3A and IDH3G subunits can be allosterically activated by citrate (CIT) or/and ADP, and the two activators can act independently or synergistically. The heterodimer composed of IDH3A and IDH3B subunits cannot be allosterically regulated and the allosteric regulation of the heterotetramer is through the IDH3G subunit and not the IDH3B subunit. The IDH3G subunit contains the allosteric site which consists of a CIT-binding site and an ADP-binding site, and the binding of CIT and ADP causes conformational changes at the allosteric site which are transmitted to the active site in the catalytic subunit (IDH3A) through a cascade of conformational changes at the heterodimer interface, leading to stabilization of the isocitrate-binding at the active site and thus activation of the enzyme. ATP can activate the heterotetramer and the heterodimer composed of IDH3A and IDH3G subunits at low concentrations but inhibits their activities at high concentrations, whereas ATP exhibits only inhibitory effect on the heterodimer composed of IDH3A and IDH3B subunits. Its function is as follows. Plays a structural role to facilitate the assembly and ensure the full activity of the enzyme catalyzing the decarboxylation of isocitrate (ICT) into alpha-ketoglutarate. The heterodimer composed of the alpha (IDH3A) and beta (IDH3B) subunits and the heterodimer composed of the alpha (IDH3A) and gamma (IDH3G) subunits, have considerable basal activity but the full activity of the heterotetramer (containing two subunits of IDH3A, one of IDH3B and one of IDH3G) requires the assembly and cooperative function of both heterodimers. In Bos taurus (Bovine), this protein is Isocitrate dehydrogenase [NAD] subunit beta, mitochondrial (IDH3B).